Reading from the N-terminus, the 349-residue chain is Mannonate dehydratase (349 aa).

The protein belongs to the mannonate dehydratase family. Requires Fe(2+) as cofactor. It depends on Mn(2+) as a cofactor.

The enzyme catalyses D-mannonate = 2-dehydro-3-deoxy-D-gluconate + H2O. Its pathway is carbohydrate metabolism; pentose and glucuronate interconversion. Catalyzes the dehydration of D-mannonate. The protein is Mannonate dehydratase of Oceanobacillus iheyensis (strain DSM 14371 / CIP 107618 / JCM 11309 / KCTC 3954 / HTE831).